The primary structure comprises 387 residues: Protein-glutamate methylesterase/protein-glutamine glutaminase 2 (387 aa).

The 118-residue stretch at 4-121 (KVLVVDDSGF…SRNPQKVKQL (118 aa)) folds into the Response regulatory domain. Asp-55 is modified (4-aspartylphosphate). The span at 148 to 183 (AAPAAPTSSSRAPAPTTAPARAVPTRTAAPATAPAA) shows a compositional bias: low complexity. A disordered region spans residues 148-199 (AAPAAPTSSSRAPAPTTAPARAVPTRTAAPATAPAAHAHHAPAHPTTSGTPK). Residues 192-384 (PTTSGTPKRK…LDDIGRHLVE (193 aa)) enclose the CheB-type methylesterase domain. Catalysis depends on residues Ser-211, His-238, and Asp-331.

It belongs to the CheB family. Phosphorylated by CheA. Phosphorylation of the N-terminal regulatory domain activates the methylesterase activity.

It localises to the cytoplasm. The enzyme catalyses [protein]-L-glutamate 5-O-methyl ester + H2O = L-glutamyl-[protein] + methanol + H(+). It catalyses the reaction L-glutaminyl-[protein] + H2O = L-glutamyl-[protein] + NH4(+). Functionally, involved in chemotaxis. Part of a chemotaxis signal transduction system that modulates chemotaxis in response to various stimuli. Catalyzes the demethylation of specific methylglutamate residues introduced into the chemoreceptors (methyl-accepting chemotaxis proteins or MCP) by CheR. Also mediates the irreversible deamidation of specific glutamine residues to glutamic acid. The polypeptide is Protein-glutamate methylesterase/protein-glutamine glutaminase 2 (Pseudomonas savastanoi pv. phaseolicola (strain 1448A / Race 6) (Pseudomonas syringae pv. phaseolicola (strain 1448A / Race 6))).